A 204-amino-acid chain; its full sequence is LexA repressor (204 aa).

Residues 29-49 (RAEIADIMGFQSKNAASDHLR) constitute a DNA-binding region (H-T-H motif). Residues S123 and K160 each act as for autocatalytic cleavage activity in the active site.

The protein belongs to the peptidase S24 family. As to quaternary structure, homodimer.

It carries out the reaction Hydrolysis of Ala-|-Gly bond in repressor LexA.. Functionally, represses a number of genes involved in the response to DNA damage (SOS response), including recA and lexA. In the presence of single-stranded DNA, RecA interacts with LexA causing an autocatalytic cleavage which disrupts the DNA-binding part of LexA, leading to derepression of the SOS regulon and eventually DNA repair. The chain is LexA repressor from Alcanivorax borkumensis (strain ATCC 700651 / DSM 11573 / NCIMB 13689 / SK2).